The sequence spans 227 residues: UPF0758 protein Dhaf_4352 (227 aa).

One can recognise an MPN domain in the interval 105–227 (VINSPQDIAH…YISLKERGIL (123 aa)). His176, His178, and Asp189 together coordinate Zn(2+). A JAMM motif motif is present at residues 176–189 (HNHPSGDPTPSSED).

It belongs to the UPF0758 family.

This chain is UPF0758 protein Dhaf_4352, found in Desulfitobacterium hafniense (strain DSM 10664 / DCB-2).